We begin with the raw amino-acid sequence, 302 residues long: Methionyl-tRNA formyltransferase (302 aa).

108–111 (SLLP) contacts (6S)-5,6,7,8-tetrahydrofolate.

Belongs to the Fmt family.

It carries out the reaction L-methionyl-tRNA(fMet) + (6R)-10-formyltetrahydrofolate = N-formyl-L-methionyl-tRNA(fMet) + (6S)-5,6,7,8-tetrahydrofolate + H(+). In terms of biological role, attaches a formyl group to the free amino group of methionyl-tRNA(fMet). The formyl group appears to play a dual role in the initiator identity of N-formylmethionyl-tRNA by promoting its recognition by IF2 and preventing the misappropriation of this tRNA by the elongation apparatus. The polypeptide is Methionyl-tRNA formyltransferase (Cereibacter sphaeroides (strain ATCC 17025 / ATH 2.4.3) (Rhodobacter sphaeroides)).